We begin with the raw amino-acid sequence, 1129 residues long: Ubiquitin carboxyl-terminal hydrolase 15 (1129 aa).

Residues 1-26 (MVLSNVDAEEVNMDSSMELEESSQEP) form a disordered region. Residues 7-23 (DAEEVNMDSSMELEESS) are compositionally biased toward acidic residues. Positions 51 to 204 (HASYSWVVKN…NDEICISVTV (154 aa)) constitute an MATH domain. Residues 230-545 (VGLKNQGATC…NAYMLVYFRK (316 aa)) enclose the USP domain. C239 serves as the catalytic Nucleophile. The active-site Proton acceptor is H481.

The protein belongs to the peptidase C19 family.

It localises to the nucleus. The catalysed reaction is Thiol-dependent hydrolysis of ester, thioester, amide, peptide and isopeptide bonds formed by the C-terminal Gly of ubiquitin (a 76-residue protein attached to proteins as an intracellular targeting signal).. Its function is as follows. Hydrolase that deubiquitinates target proteins. Cleaves the UBL propeptide in sde2. Involved in regulating the steady-state levels of proteins including prp4. This Schizosaccharomyces pombe (strain 972 / ATCC 24843) (Fission yeast) protein is Ubiquitin carboxyl-terminal hydrolase 15.